The following is a 345-amino-acid chain: uncharacterized protein (345 aa).

Transmembrane regions (helical) follow at residues 23–43 and 56–76; these read VVGFCGVFALIALSLGIYSYV and FLIALGGFTLLLSFVINFVAL. Residues 326-345 are disordered; that stretch reads VTEPTTNSKRKPVKAKKAKK. Basic residues predominate over residues 333-345; that stretch reads SKRKPVKAKKAKK.

The protein resides in the cell membrane. This is an uncharacterized protein from Mycoplasma pneumoniae (strain ATCC 29342 / M129 / Subtype 1) (Mycoplasmoides pneumoniae).